Here is a 102-residue protein sequence, read N- to C-terminus: NADH-quinone oxidoreductase subunit K (102 aa).

A run of 3 helical transmembrane segments spans residues 6–26 (LEHG…GVMV), 30–50 (LLFM…AFVL), and 62–82 (IMFI…LAIV).

The protein belongs to the complex I subunit 4L family. In terms of assembly, NDH-1 is composed of 14 different subunits. Subunits NuoA, H, J, K, L, M, N constitute the membrane sector of the complex.

The protein resides in the cell inner membrane. The enzyme catalyses a quinone + NADH + 5 H(+)(in) = a quinol + NAD(+) + 4 H(+)(out). Functionally, NDH-1 shuttles electrons from NADH, via FMN and iron-sulfur (Fe-S) centers, to quinones in the respiratory chain. The immediate electron acceptor for the enzyme in this species is believed to be ubiquinone. Couples the redox reaction to proton translocation (for every two electrons transferred, four hydrogen ions are translocated across the cytoplasmic membrane), and thus conserves the redox energy in a proton gradient. This Acinetobacter baylyi (strain ATCC 33305 / BD413 / ADP1) protein is NADH-quinone oxidoreductase subunit K.